The primary structure comprises 477 residues: Bifunctional protein HldE (477 aa).

The segment at 1–318 (MKVTLPEFER…ENAVRGRADT (318 aa)) is ribokinase. The residue at position 179 (K179) is an N6-acetyllysine. 195 to 198 (NLSE) is a binding site for ATP. D264 is a catalytic residue. The interval 344-477 (MTNGVFDILH…IKKIQQDKKG (134 aa)) is cytidylyltransferase.

In the N-terminal section; belongs to the carbohydrate kinase PfkB family. It in the C-terminal section; belongs to the cytidylyltransferase family. As to quaternary structure, homodimer.

It catalyses the reaction D-glycero-beta-D-manno-heptose 7-phosphate + ATP = D-glycero-beta-D-manno-heptose 1,7-bisphosphate + ADP + H(+). The catalysed reaction is D-glycero-beta-D-manno-heptose 1-phosphate + ATP + H(+) = ADP-D-glycero-beta-D-manno-heptose + diphosphate. It participates in nucleotide-sugar biosynthesis; ADP-L-glycero-beta-D-manno-heptose biosynthesis; ADP-L-glycero-beta-D-manno-heptose from D-glycero-beta-D-manno-heptose 7-phosphate: step 1/4. It functions in the pathway nucleotide-sugar biosynthesis; ADP-L-glycero-beta-D-manno-heptose biosynthesis; ADP-L-glycero-beta-D-manno-heptose from D-glycero-beta-D-manno-heptose 7-phosphate: step 3/4. Its pathway is bacterial outer membrane biogenesis; LPS core biosynthesis. In terms of biological role, catalyzes the phosphorylation of D-glycero-D-manno-heptose 7-phosphate at the C-1 position to selectively form D-glycero-beta-D-manno-heptose-1,7-bisphosphate. Functionally, catalyzes the ADP transfer from ATP to D-glycero-beta-D-manno-heptose 1-phosphate, yielding ADP-D-glycero-beta-D-manno-heptose. The chain is Bifunctional protein HldE from Shigella flexneri.